The primary structure comprises 114 residues: Ribosome-binding factor A (114 aa).

Belongs to the RbfA family. Monomer. Binds 30S ribosomal subunits, but not 50S ribosomal subunits or 70S ribosomes.

The protein resides in the cytoplasm. In terms of biological role, one of several proteins that assist in the late maturation steps of the functional core of the 30S ribosomal subunit. Associates with free 30S ribosomal subunits (but not with 30S subunits that are part of 70S ribosomes or polysomes). Required for efficient processing of 16S rRNA. May interact with the 5'-terminal helix region of 16S rRNA. This chain is Ribosome-binding factor A, found in Listeria innocua serovar 6a (strain ATCC BAA-680 / CLIP 11262).